An 87-amino-acid chain; its full sequence is Exodeoxyribonuclease 7 small subunit (87 aa).

This sequence belongs to the XseB family. In terms of assembly, heterooligomer composed of large and small subunits.

The protein resides in the cytoplasm. It catalyses the reaction Exonucleolytic cleavage in either 5'- to 3'- or 3'- to 5'-direction to yield nucleoside 5'-phosphates.. Its function is as follows. Bidirectionally degrades single-stranded DNA into large acid-insoluble oligonucleotides, which are then degraded further into small acid-soluble oligonucleotides. This is Exodeoxyribonuclease 7 small subunit from Pelotomaculum thermopropionicum (strain DSM 13744 / JCM 10971 / SI).